Here is a 74-residue protein sequence, read N- to C-terminus: MTHPKPDDRSDNVEKIQNTIDHTLENLNESKDYINAHAEELSSKEKDELSSKNERRKESVDGLRSEIKDEADSQ.

The disordered stretch occupies residues 38–74; it reads AEELSSKEKDELSSKNERRKESVDGLRSEIKDEADSQ.

This sequence belongs to the Tlp family.

It is found in the spore core. This Oceanobacillus iheyensis (strain DSM 14371 / CIP 107618 / JCM 11309 / KCTC 3954 / HTE831) protein is Small, acid-soluble spore protein Tlp.